We begin with the raw amino-acid sequence, 290 residues long: Nucleoid occlusion protein (290 aa).

Residues 153–172 (EALAQRLGKGQSTIANKLRL) constitute a DNA-binding region (H-T-H motif).

Belongs to the ParB family.

Its subcellular location is the cytoplasm. It is found in the nucleoid. Its function is as follows. Effects nucleoid occlusion by binding relatively nonspecifically to DNA and preventing the assembly of the division machinery in the vicinity of the nucleoid, especially under conditions that disturb the cell cycle. It helps to coordinate cell division and chromosome segregation by preventing the formation of the Z ring through the nucleoid, which would cause chromosome breakage. The polypeptide is Nucleoid occlusion protein (Bacillus cereus (strain ATCC 10987 / NRS 248)).